We begin with the raw amino-acid sequence, 100 residues long: Mini zinc finger protein 2 (100 aa).

The segment at 1 to 26 (MRKRQVVLRRASPEEPSRSSSTASSL) is disordered. The ZF-HD dimerization-type; degenerate zinc-finger motif lies at 33 to 83 (YGECQKNHAAAVGGYAVDGCREFMASRGEEGTVAALTCAACGCHRSFHRRE).

As to quaternary structure, homo- and heterodimers. Interacts with ZHD1, ZHD3, ZHD5, ZHD8, ZHD10 and ZHD13. Mostly expressed in stems, flowers and siliques, and, to a lower extent, in inflorescence.

The protein localises to the cytoplasm. Its function is as follows. Inhibits zinc finger homeodomain (ZHD) transcription factors by interacting with them to prevent both their nuclear localization and their DNA-binding properties. Involved in integrating signals from multiple hormones by regulating the expression of specific genes. The sequence is that of Mini zinc finger protein 2 (MIF2) from Arabidopsis thaliana (Mouse-ear cress).